We begin with the raw amino-acid sequence, 479 residues long: Beta-monoglucosyldiacylglycerol synthase (479 aa).

4 consecutive transmembrane segments (helical) span residues 48–68, 363–383, 389–409, and 428–448; these read AAVMLMAIWTVVITLHYWVWG, FLLMQYLLPTAAVPDLLMALW, LLTPLSYLAIGFSCWGMYYGL, and LARTIGGTIYMFHWLIIMPAV.

Belongs to the glycosyltransferase 2 family. The cofactor is Mg(2+).

It is found in the membrane. It carries out the reaction a 1,2-diacyl-sn-glycerol + UDP-alpha-D-glucose = a 1,2-diacyl-3-O-(beta-D-glucopyranosyl)-sn-glycerol + UDP + H(+). In terms of biological role, glucosyltransferase involved in the biosynthesis of the non-bilayer-forming membrane lipid beta-monoglucosyldiacylglycerol which contributes to regulate the properties and stability of the membrane. Catalyzes the transfer of a glucosyl residue from UDP-Glc to diacylglycerol (DAG) acceptor to form the corresponding beta-glucosyl-DAG (1,2-diacyl-3-O-(beta-D-glucopyranosyl)-sn-glycerol). It can only use UDP-Glc as sugar donor. Two types of DAG (dipalmitoyl-DAG (DPDAG) and 1-oleoyl-2-palmitoyl-DAG (OPDAG)) can be used as sugar acceptors, but OPDAG is preferred. In Synechocystis sp. (strain ATCC 27184 / PCC 6803 / Kazusa), this protein is Beta-monoglucosyldiacylglycerol synthase.